The chain runs to 515 residues: Maturase K (515 aa).

Belongs to the intron maturase 2 family. MatK subfamily.

The protein localises to the plastid. It localises to the chloroplast. Functionally, usually encoded in the trnK tRNA gene intron. Probably assists in splicing its own and other chloroplast group II introns. The sequence is that of Maturase K from Pinus uncinata (Mountain pine).